The chain runs to 68 residues: Conotoxin Mr3.4 (68 aa).

The N-terminal stretch at 1-19 (MSKLGVLLTICLLLFPLTA) is a signal peptide. The propeptide occupies 20–49 (VPLDGDQPADRPAERMQDDISSERHPFFDR). 3 cysteine pairs are disulfide-bonded: cysteine 53–cysteine 67, cysteine 54–cysteine 63, and cysteine 59–cysteine 66. The residue at position 65 (proline 65) is a 4-hydroxyproline.

This sequence belongs to the conotoxin M superfamily. Expressed by the venom duct.

The protein resides in the secreted. This is Conotoxin Mr3.4 from Conus marmoreus (Marble cone).